The sequence spans 336 residues: MLSYAPENAYQRASTMENKKVFPKEKSGLHPRNRHCSRYDFDALSVSCPELIPFLAPTAYGDISVDFADPLAVKMLNKALLKHFYGIEYWDIPADSLCPPIPGRADYVHHLADLLASCNGEVIPKGKNIALLDIGVGANCIYPIIGQREYGWRFTGTDIDSHALSAAKMVVSMNPTLKNTLRLKQQKDPHAIFEGVWAVNERYDATLCNPPFHGSAEEAAATTRRKLHKLGKNEVAAKPVQNFGGKNSELWCEGGEEGFVSRMVAESVAKAQNCFWFTSLISKKTTLPAIYHALRYVKAVEVRTIEMAQGQKVSRFVAWTFLTPEQQAAWVAERWA.

The protein belongs to the methyltransferase superfamily. METTL16/RlmF family.

The protein resides in the cytoplasm. It carries out the reaction adenosine(1618) in 23S rRNA + S-adenosyl-L-methionine = N(6)-methyladenosine(1618) in 23S rRNA + S-adenosyl-L-homocysteine + H(+). Its function is as follows. Specifically methylates the adenine in position 1618 of 23S rRNA. The protein is Ribosomal RNA large subunit methyltransferase F of Yersinia pestis bv. Antiqua (strain Nepal516).